Reading from the N-terminus, the 122-residue chain is MIQPQTLLNVADNSGARELMCIRIIGASNRRYAHIGDVIVAVIKKAVPNTPLERSEVIRAVIVRTCKELKRENGMIIRYDDNAAVVIDQEGNPKGTRIFGAIARELRQLNFTKIISLAPEVL.

Belongs to the universal ribosomal protein uL14 family. Part of the 50S ribosomal subunit.

The protein resides in the plastid. It localises to the chloroplast. In terms of biological role, binds to 23S rRNA. The protein is Large ribosomal subunit protein uL14c of Cucumis sativus (Cucumber).